Here is a 104-residue protein sequence, read N- to C-terminus: Large ribosomal subunit protein uL24 (104 aa).

It belongs to the universal ribosomal protein uL24 family. In terms of assembly, part of the 50S ribosomal subunit.

One of two assembly initiator proteins, it binds directly to the 5'-end of the 23S rRNA, where it nucleates assembly of the 50S subunit. In terms of biological role, one of the proteins that surrounds the polypeptide exit tunnel on the outside of the subunit. In Caulobacter sp. (strain K31), this protein is Large ribosomal subunit protein uL24.